The sequence spans 298 residues: N-acetylmuramic acid 6-phosphate etherase (298 aa).

The region spanning isoleucine 55 to lysine 218 is the SIS domain. The Proton donor role is filled by glutamate 83. Glutamate 114 is a catalytic residue.

The protein belongs to the GCKR-like family. MurNAc-6-P etherase subfamily. Homodimer.

It catalyses the reaction N-acetyl-D-muramate 6-phosphate + H2O = N-acetyl-D-glucosamine 6-phosphate + (R)-lactate. The protein operates within amino-sugar metabolism; 1,6-anhydro-N-acetylmuramate degradation. It functions in the pathway amino-sugar metabolism; N-acetylmuramate degradation. Its pathway is cell wall biogenesis; peptidoglycan recycling. In terms of biological role, specifically catalyzes the cleavage of the D-lactyl ether substituent of MurNAc 6-phosphate, producing GlcNAc 6-phosphate and D-lactate. Together with AnmK, is also required for the utilization of anhydro-N-acetylmuramic acid (anhMurNAc) either imported from the medium or derived from its own cell wall murein, and thus plays a role in cell wall recycling. The protein is N-acetylmuramic acid 6-phosphate etherase of Shigella boydii serotype 18 (strain CDC 3083-94 / BS512).